The following is a 122-amino-acid chain: NLFQFAKMINGKLGAFSVWNYISYGCYCGWGGQGTPKDATDRCCFVHDCCYGRVRGCNPKLAIYSYSFKKGNIVCGKNNGCLRDICECDRVAANCFHQNKNTYNKNYKFLSSSRCRQTSEQC.

Cystine bridges form between Cys-26–Cys-115, Cys-28–Cys-44, Cys-43–Cys-95, Cys-49–Cys-122, Cys-50–Cys-88, Cys-57–Cys-81, and Cys-75–Cys-86. 3 residues coordinate Ca(2+): Tyr-27, Gly-29, and Gly-31. Residue His-47 is part of the active site. Asp-48 serves as a coordination point for Ca(2+). Residue Asp-89 is part of the active site.

This sequence belongs to the phospholipase A2 family. Group II subfamily. D49 sub-subfamily. As to quaternary structure, heterodimer of A (AC P04084) and B chains; non-covalently linked. The A chain (acidic) is non-toxic, and increases the toxicity of the B chain (basic). The A chain may act as factor stabilizing the complex structure and hence retaining its toxicity by preventing non-specific binding. Upon binding to the target membranes the A chain is postulated to dissociate. Ca(2+) is required as a cofactor. In terms of tissue distribution, expressed by the venom gland.

The protein localises to the secreted. It catalyses the reaction a 1,2-diacyl-sn-glycero-3-phosphocholine + H2O = a 1-acyl-sn-glycero-3-phosphocholine + a fatty acid + H(+). Its function is as follows. Heterodimer: postsynaptic neurotoxin. Functionally, monomer: snake venom phospholipase A2 (PLA2) that shows hemolytic activity and inhibition of platelet aggregation. The hemolytic activity occurs only in presence of fatty acids (unsaturated fatty acids facilitate induce a strong hemolytic activity, whereas saturated fatty acids induce a slight activity). The inhibition of platelet aggregation is almost maximal when aggregation is induced by collagen, and arachidonic acid, whereas it is only of 30% when the aggregation is induced by ADP. PLA2 catalyzes the calcium-dependent hydrolysis of the 2-acyl groups in 3-sn-phosphoglycerides. The sequence is that of Basic phospholipase A2 vipoxin B chain from Vipera ammodytes meridionalis (Eastern sand viper).